Reading from the N-terminus, the 503-residue chain is E3 ubiquitin-protein ligase ariadne-1 (503 aa).

The segment covering 1-11 (MDSDNDNDFCD) has biased composition (acidic residues). A disordered region spans residues 1–40 (MDSDNDNDFCDNVDSGNVSSGDDGDDDFGMEVDLPSSADR). Residues 12-21 (NVDSGNVSSG) are compositionally biased toward low complexity. The tract at residues 129–340 (QCEECEICFS…SSWYNCNRYD (212 aa)) is TRIAD supradomain. Positions 133, 136, 150, 152, 155, 158, 178, 183, 223, 228, 244, 246, 251, 254, 259, 264, 291, and 294 each coordinate Zn(2+). The RING-type 1 zinc finger occupies 133-183 (CEICFSQLPPDSMAGLECGHRFCMPCWHEYLSTKIVAEGLGQTISCAAHGC). The important for interaction with Ubc10 stretch occupies residues 133-201 (CEICFSQLPP…VANLVTDARV (69 aa)). An IBR-type zinc finger spans residues 203–264 (VKYQQLITNS…GENWHDPVKC (62 aa)). The segment at 291 to 322 (CPRCSVTIEKDGGCNHMVCKNQNCKNEFCWVC) adopts an RING-type 2; atypical zinc-finger fold. The active site involves Cys304. Positions 309, 314, 319, 322, 329, and 336 each coordinate Zn(2+). The stretch at 341–361 (EDEAKTARDAQEKLRSSLARY) forms a coiled coil.

It belongs to the RBR family. Ariadne subfamily. Can form homodimers. Interacts (via RING-type 1 zinc finger) with Ubc10. Interacts with the LINC complex member koi. Interacts with park. Interacts with ari-2. Specifically interacts with isoform ECR-A of EcR. In terms of processing, autophosphorylated. In terms of tissue distribution, widely expressed, with prominent levels in the nervous system and female gonads.

It is found in the cytoplasm. It localises to the nucleus. It carries out the reaction [E2 ubiquitin-conjugating enzyme]-S-ubiquitinyl-L-cysteine + [acceptor protein]-L-lysine = [E2 ubiquitin-conjugating enzyme]-L-cysteine + [acceptor protein]-N(6)-ubiquitinyl-L-lysine.. Its function is as follows. Atypical E3 ubiquitin-protein ligase, which catalyzes ubiquitination of target proteins together with ubiquitin-conjugating enzyme E2 Ubc10. Controls the subcellular localization and morphology of muscle nuclei (myonuclei) by regulating the protein levels and distribution of the LINC (LInker of Nucleoskeleton and Cytoskeleton) complex. Functions by mediating the monoubiquitination of the LINC complex subunit koi leading to its subsequent proteasomal degradation. Appears to function, at least partially redundantly, with the RBR E3 ligase family member park in nuclear localization and morphology. Likely to function in metamorphosis by regulating the proteins levels of EcR isoform A (ECR-A) and its heterodimeric partner usp, via the ubiquitination and subsequent degradation of ECR-A. This Drosophila melanogaster (Fruit fly) protein is E3 ubiquitin-protein ligase ariadne-1.